The following is a 117-amino-acid chain: Modulator protein MzrA (117 aa).

The Cytoplasmic portion of the chain corresponds to methionine 1–serine 11. The helical transmembrane segment at alanine 12–serine 29 threads the bilayer. Topologically, residues serine 30 to serine 117 are periplasmic.

Belongs to the MzrA family. As to quaternary structure, interacts with EnvZ.

The protein localises to the cell inner membrane. Modulates the activity of the EnvZ/OmpR two-component regulatory system, probably by directly modulating EnvZ enzymatic activity and increasing stability of phosphorylated OmpR. The sequence is that of Modulator protein MzrA from Dickeya dadantii (strain 3937) (Erwinia chrysanthemi (strain 3937)).